We begin with the raw amino-acid sequence, 243 residues long: Leucyl/phenylalanyl-tRNA--protein transferase (243 aa).

It belongs to the L/F-transferase family.

The protein localises to the cytoplasm. The catalysed reaction is N-terminal L-lysyl-[protein] + L-leucyl-tRNA(Leu) = N-terminal L-leucyl-L-lysyl-[protein] + tRNA(Leu) + H(+). It catalyses the reaction N-terminal L-arginyl-[protein] + L-leucyl-tRNA(Leu) = N-terminal L-leucyl-L-arginyl-[protein] + tRNA(Leu) + H(+). The enzyme catalyses L-phenylalanyl-tRNA(Phe) + an N-terminal L-alpha-aminoacyl-[protein] = an N-terminal L-phenylalanyl-L-alpha-aminoacyl-[protein] + tRNA(Phe). Functions in the N-end rule pathway of protein degradation where it conjugates Leu, Phe and, less efficiently, Met from aminoacyl-tRNAs to the N-termini of proteins containing an N-terminal arginine or lysine. This Saccharophagus degradans (strain 2-40 / ATCC 43961 / DSM 17024) protein is Leucyl/phenylalanyl-tRNA--protein transferase.